A 351-amino-acid polypeptide reads, in one-letter code: UDP-3-O-acylglucosamine N-acyltransferase (351 aa).

The Proton acceptor role is filled by His239.

Belongs to the transferase hexapeptide repeat family. LpxD subfamily. In terms of assembly, homotrimer.

It catalyses the reaction a UDP-3-O-[(3R)-3-hydroxyacyl]-alpha-D-glucosamine + a (3R)-hydroxyacyl-[ACP] = a UDP-2-N,3-O-bis[(3R)-3-hydroxyacyl]-alpha-D-glucosamine + holo-[ACP] + H(+). The protein operates within bacterial outer membrane biogenesis; LPS lipid A biosynthesis. Catalyzes the N-acylation of UDP-3-O-acylglucosamine using 3-hydroxyacyl-ACP as the acyl donor. Is involved in the biosynthesis of lipid A, a phosphorylated glycolipid that anchors the lipopolysaccharide to the outer membrane of the cell. In Vibrio cholerae serotype O1 (strain ATCC 39315 / El Tor Inaba N16961), this protein is UDP-3-O-acylglucosamine N-acyltransferase.